We begin with the raw amino-acid sequence, 414 residues long: Putative cytochrome P450 126 (414 aa).

C363 is a binding site for heme.

It belongs to the cytochrome P450 family. Heme is required as a cofactor.

The sequence is that of Putative cytochrome P450 126 (cyp126) from Mycobacterium tuberculosis (strain CDC 1551 / Oshkosh).